A 464-amino-acid chain; its full sequence is Olfactomedin (464 aa).

The N-terminal stretch at 1-16 (MYICLLTLVLIHAAAA) is a signal peptide. N-linked (GlcNAc...) asparagine glycosylation is found at Asn-21, Asn-85, Asn-143, Asn-228, Asn-279, and Asn-383. Residues 192-464 (SCQHQGLAHI…LLHYDIALKP (273 aa)) form the Olfactomedin-like domain. An intrachain disulfide couples Cys-193 to Cys-394.

Oligomer; disulfide-linked. Post-translationally, most, if not all, of the six potential sites for N-glycosylation carry carbohydrate moieties of 8-10 sugar residues. Expressed exclusively in olfactory neuroepithelium.

It localises to the secreted. It is found in the extracellular space. Its function is as follows. May influence the maintenance, growth, or differentiation of chemosensory cilia on the apical dendrites of olfactory neurons. Major component of the extracellular matrix of the olfactory neuroepithelium. The chain is Olfactomedin from Aquarana catesbeiana (American bullfrog).